The primary structure comprises 187 residues: Elongation factor P (187 aa).

Belongs to the elongation factor P family.

The protein resides in the cytoplasm. Its pathway is protein biosynthesis; polypeptide chain elongation. Involved in peptide bond synthesis. Stimulates efficient translation and peptide-bond synthesis on native or reconstituted 70S ribosomes in vitro. Probably functions indirectly by altering the affinity of the ribosome for aminoacyl-tRNA, thus increasing their reactivity as acceptors for peptidyl transferase. This is Elongation factor P from Rhodococcus jostii (strain RHA1).